The following is a 387-amino-acid chain: Succinate--CoA ligase [ADP-forming] subunit beta (387 aa).

Residues 9-243 (KEILSTYGIP…YSQLDPLEIT (235 aa)) enclose the ATP-grasp domain. ATP is bound by residues Lys45, 52-54 (GRG), Glu98, Val101, and Glu106. Mg(2+)-binding residues include Asn198 and Asp212. Residues Asn263 and 320–322 (GIM) contribute to the substrate site.

The protein belongs to the succinate/malate CoA ligase beta subunit family. As to quaternary structure, heterotetramer of two alpha and two beta subunits. The cofactor is Mg(2+).

The catalysed reaction is succinate + ATP + CoA = succinyl-CoA + ADP + phosphate. The enzyme catalyses GTP + succinate + CoA = succinyl-CoA + GDP + phosphate. Its pathway is carbohydrate metabolism; tricarboxylic acid cycle; succinate from succinyl-CoA (ligase route): step 1/1. Its function is as follows. Succinyl-CoA synthetase functions in the citric acid cycle (TCA), coupling the hydrolysis of succinyl-CoA to the synthesis of either ATP or GTP and thus represents the only step of substrate-level phosphorylation in the TCA. The beta subunit provides nucleotide specificity of the enzyme and binds the substrate succinate, while the binding sites for coenzyme A and phosphate are found in the alpha subunit. The sequence is that of Succinate--CoA ligase [ADP-forming] subunit beta from Trichlorobacter lovleyi (strain ATCC BAA-1151 / DSM 17278 / SZ) (Geobacter lovleyi).